A 102-amino-acid polypeptide reads, in one-letter code: Large ribosomal subunit protein bL28 (102 aa).

This sequence belongs to the bacterial ribosomal protein bL28 family.

The sequence is that of Large ribosomal subunit protein bL28 from Bradyrhizobium diazoefficiens (strain JCM 10833 / BCRC 13528 / IAM 13628 / NBRC 14792 / USDA 110).